Reading from the N-terminus, the 1006-residue chain is Phosphatidylinositol-3,5-bisphosphate 3-phosphatase MTMR3 (1006 aa).

A compositionally biased stretch (low complexity) spans 1–10 (MTVTSSAAID). Positions 1–29 (MTVTSSAAIDIGGGGGGRRSDRLDSDRTS) are disordered. Positions 18–29 (RRSDRLDSDRTS) are enriched in basic and acidic residues. Residues 224 to 630 (AWKFSEAVDE…INLRVWHEVF (407 aa)) enclose the Myotubularin phosphatase domain. A 1,2-diacyl-sn-glycero-3-phospho-(1D-myo-inositol-3,5-bisphosphate) contacts are provided by Asn377, Asn402, and Ile403. 3 residues coordinate a 1,2-diacyl-sn-glycero-3-phospho-(1D-myo-inositol-3-phosphate): Asn377, Asn402, and Ile403. The Phosphocysteine intermediate role is filled by Cys463. A 1,2-diacyl-sn-glycero-3-phospho-(1D-myo-inositol-3,5-bisphosphate)-binding residues include Ser464, Asp465, Gly466, Trp467, Asp468, Arg469, Lys505, and Arg509. 6 residues coordinate a 1,2-diacyl-sn-glycero-3-phospho-(1D-myo-inositol-3-phosphate): Ser464, Asp465, Gly466, Trp467, Asp468, and Arg469. Arg509 is a binding site for a 1,2-diacyl-sn-glycero-3-phospho-(1D-myo-inositol-3-phosphate). The tract at residues 641–705 (FSPKEERPLS…PSDNTNSLPM (65 aa)) is disordered. Positions 651–705 (GCTTPMNTSTSTNLVKSKSSESINSLNVDGSAKESSQQHPTCSTTPSDNTNSLPM) are enriched in polar residues. The FYVE-type zinc-finger motif lies at 818–883 (EGESGHCAYC…ACDSCYDSMH (66 aa)). Positions 824, 827, 845, 848, 853, 856, 875, and 878 each coordinate Zn(2+). The tract at residues 886–1006 (DLKLSSSSTT…DVLDVNEQPL (121 aa)) is disordered. Low complexity-rich tracts occupy residues 890-901 (SSSSTTTTSSST) and 913-926 (DNNS…VSEN). Composition is skewed to basic and acidic residues over residues 933–954 (VEEK…ETKC) and 976–985 (HSRDPLKSID).

This sequence belongs to the protein-tyrosine phosphatase family. Non-receptor class myotubularin subfamily. In terms of tissue distribution, expressed in the body wall muscle and in eggs. Expressed in head neurons. Expressed in the intestine. Expressed in pharyngeal cells, vulval muscle cells and cells of the tail region.

The protein resides in the cytoplasm. It localises to the membrane. It carries out the reaction a 1,2-diacyl-sn-glycero-3-phospho-(1D-myo-inositol-3,5-bisphosphate) + H2O = a 1,2-diacyl-sn-glycero-3-phospho-(1D-myo-inositol-5-phosphate) + phosphate. It catalyses the reaction a 1,2-diacyl-sn-glycero-3-phospho-(1D-myo-inositol-3-phosphate) + H2O = a 1,2-diacyl-sn-glycero-3-phospho-(1D-myo-inositol) + phosphate. The enzyme catalyses 1,2-dihexadecanoyl-sn-glycero-3-phospho-(1D-myo-inositol-3-phosphate) + H2O = 1,2-dihexadecanoyl-sn-glycero-3-phospho-(1D-myo-inositol) + phosphate. The catalysed reaction is 1,2-dihexadecanoyl-sn-glycero-3-phospho-(1D-myo-inositol-3,5-phosphate) + H2O = 1,2-dihexadecanoyl-sn-glycero-3-phospho-(1D-myo-inositol-5-phosphate) + phosphate. It carries out the reaction 1,2-dioctanoyl-sn-glycero-3-phospho-(1-D-myo-inositol-3-phosphate) + H2O = 1,2-dioctanoyl-sn-glycero-3-phospho-(1D-myo-inositol) + phosphate. With respect to regulation, inhibited by sodium vanadate and peroxide. In terms of biological role, preferentially dephosphorylates phosphatidylinositol 3-phosphate (PI3P), and has some activity towards phosphatidylinositol 3,5-bisphosphate (PI35P). Positively regulates autophagy and is recruited to autophagosomes by PI3P where it catalyzes PI3P turnover to promote autophagosome maturation. Thought to have a role in maintenance of muscle function. Involved in locomotion and lifespan determination. The protein is Phosphatidylinositol-3,5-bisphosphate 3-phosphatase MTMR3 of Caenorhabditis elegans.